Here is a 511-residue protein sequence, read N- to C-terminus: Maturase K (511 aa).

This sequence belongs to the intron maturase 2 family. MatK subfamily.

It is found in the plastid. The protein resides in the chloroplast. In terms of biological role, usually encoded in the trnK tRNA gene intron. Probably assists in splicing its own and other chloroplast group II introns. In Campsis radicans (Trumpet creeper), this protein is Maturase K.